We begin with the raw amino-acid sequence, 265 residues long: uncharacterized protein (265 aa).

Thiamine diphosphate is bound at residue Glu47. Positions 204–247 (QHQMWLVQHILRVARHCGFTVTTMEMTLIETQVRLKITVKSDRT) are thiamine pyrophosphate binding.

It belongs to the TPP enzyme family. Mg(2+) is required as a cofactor. Requires thiamine diphosphate as cofactor.

In terms of biological role, truncated acetolactase synthase; no longer catalytically active. This is an uncharacterized protein from Haemophilus influenzae (strain ATCC 51907 / DSM 11121 / KW20 / Rd).